The sequence spans 515 residues: ATP-dependent rRNA helicase rrp-3 (515 aa).

The interval 1–85 is disordered; sequence MSTKRRKTSD…LDVAPEQEEV (85 aa). A compositionally biased stretch (low complexity) spans 15 to 24; the sequence is LKKAAAPSAP. Basic and acidic residues predominate over residues 25–55; sequence ELKKEKKVKDKSTKDKSSTKKTEKTEKKQDA. The span at 69 to 85 shows a compositional bias: acidic residues; that stretch reads TEEDSVTLDVAPEQEEV. The Q motif motif lies at 90–118; sequence KTFKDLGIVDALCEACERLGYKNPTPIQE. The region spanning 121-292 is the Helicase ATP-binding domain; sequence IPLALQNRDI…RASLRDPLKV (172 aa). 134-141 provides a ligand contact to ATP; sequence AETGSGKT. Residues 240-243 carry the DEAD box motif; the sequence is DEAD. The 149-residue stretch at 316–464 folds into the Helicase C-terminal domain; the sequence is HKDTYLVYLC…EYPLEKDEVM (149 aa). The disordered stretch occupies residues 482–515; the sequence is KSLMENQGKHGGLLKRKRGNGQGGGRDHMDAEEG. A compositionally biased stretch (basic and acidic residues) spans 506-515; it reads GRDHMDAEEG.

Belongs to the DEAD box helicase family. DDX47/RRP3 subfamily.

The protein localises to the nucleus. Functionally, required for pre-ribosomal RNA processing. Involved in the maturation of the 35S-pre-rRNA and to its cleavage to mature 18S rRNA. The polypeptide is ATP-dependent rRNA helicase rrp-3 (rrp-3) (Neurospora crassa (strain ATCC 24698 / 74-OR23-1A / CBS 708.71 / DSM 1257 / FGSC 987)).